The following is a 310-amino-acid chain: Lipoyl synthase (310 aa).

[4Fe-4S] cluster is bound by residues Cys51, Cys56, Cys62, Cys77, Cys81, Cys84, and Ser290. Positions 63 to 280 constitute a Radical SAM core domain; it reads WSRKTATYLA…RRVGESLGLF (218 aa).

Belongs to the radical SAM superfamily. Lipoyl synthase family. It depends on [4Fe-4S] cluster as a cofactor.

Its subcellular location is the cytoplasm. It catalyses the reaction [[Fe-S] cluster scaffold protein carrying a second [4Fe-4S](2+) cluster] + N(6)-octanoyl-L-lysyl-[protein] + 2 oxidized [2Fe-2S]-[ferredoxin] + 2 S-adenosyl-L-methionine + 4 H(+) = [[Fe-S] cluster scaffold protein] + N(6)-[(R)-dihydrolipoyl]-L-lysyl-[protein] + 4 Fe(3+) + 2 hydrogen sulfide + 2 5'-deoxyadenosine + 2 L-methionine + 2 reduced [2Fe-2S]-[ferredoxin]. It participates in protein modification; protein lipoylation via endogenous pathway; protein N(6)-(lipoyl)lysine from octanoyl-[acyl-carrier-protein]: step 2/2. Catalyzes the radical-mediated insertion of two sulfur atoms into the C-6 and C-8 positions of the octanoyl moiety bound to the lipoyl domains of lipoate-dependent enzymes, thereby converting the octanoylated domains into lipoylated derivatives. The protein is Lipoyl synthase of Chlamydia abortus (strain DSM 27085 / S26/3) (Chlamydophila abortus).